The following is a 309-amino-acid chain: Ferredoxin--NADP reductase (309 aa).

FAD contacts are provided by Asp25, Gln33, Tyr38, Val77, Phe107, Asp267, and Thr307.

The protein belongs to the ferredoxin--NADP reductase type 2 family. As to quaternary structure, homodimer. Requires FAD as cofactor.

The enzyme catalyses 2 reduced [2Fe-2S]-[ferredoxin] + NADP(+) + H(+) = 2 oxidized [2Fe-2S]-[ferredoxin] + NADPH. The protein is Ferredoxin--NADP reductase of Lactobacillus acidophilus (strain ATCC 700396 / NCK56 / N2 / NCFM).